The chain runs to 200 residues: 3-isopropylmalate dehydratase small subunit (200 aa).

The protein belongs to the LeuD family. LeuD type 1 subfamily. As to quaternary structure, heterodimer of LeuC and LeuD.

It carries out the reaction (2R,3S)-3-isopropylmalate = (2S)-2-isopropylmalate. The protein operates within amino-acid biosynthesis; L-leucine biosynthesis; L-leucine from 3-methyl-2-oxobutanoate: step 2/4. Functionally, catalyzes the isomerization between 2-isopropylmalate and 3-isopropylmalate, via the formation of 2-isopropylmaleate. In Aliivibrio fischeri (strain ATCC 700601 / ES114) (Vibrio fischeri), this protein is 3-isopropylmalate dehydratase small subunit.